The chain runs to 806 residues: Sucrose synthase (806 aa).

Residues 275-752 (MVFNVVILSP…GLQRIEEKYT (478 aa)) form a GT-B glycosyltransferase region.

Belongs to the glycosyltransferase 1 family. Plant sucrose synthase subfamily.

The enzyme catalyses an NDP-alpha-D-glucose + D-fructose = a ribonucleoside 5'-diphosphate + sucrose + H(+). Sucrose-cleaving enzyme that provides UDP-glucose and fructose for various metabolic pathways. The protein is Sucrose synthase (SUCS) of Vicia faba (Broad bean).